Consider the following 228-residue polypeptide: L-ribulose-5-phosphate 4-epimerase UlaF (228 aa).

Substrate contacts are provided by residues 26-27 (GN), 43-44 (SG), and 72-73 (SS). The Zn(2+) site is built by aspartate 74, histidine 93, and histidine 95. Aspartate 118 serves as the catalytic Proton donor/acceptor. A Zn(2+)-binding site is contributed by histidine 167. Tyrosine 225 functions as the Proton donor/acceptor in the catalytic mechanism.

This sequence belongs to the aldolase class II family. AraD/FucA subfamily. It depends on Zn(2+) as a cofactor.

The catalysed reaction is L-ribulose 5-phosphate = D-xylulose 5-phosphate. It functions in the pathway cofactor degradation; L-ascorbate degradation; D-xylulose 5-phosphate from L-ascorbate: step 4/4. In terms of biological role, catalyzes the isomerization of L-ribulose 5-phosphate to D-xylulose 5-phosphate. Is involved in the anaerobic L-ascorbate utilization. The chain is L-ribulose-5-phosphate 4-epimerase UlaF from Salmonella paratyphi A (strain ATCC 9150 / SARB42).